A 184-amino-acid chain; its full sequence is MLDAFSRSVVSADAKTAAVGAGDIAALRQYVAEGNKRLDAVNAITSNASCIVSDAVTGMICENTGLIQAGGNCYPNRRMAACLRDGEIILRYISYALLAGDASVLDDRCLNGLKETYIALGVPAQSAARAVAIMKASATAHIGETNTQANGGAKFRKMETTQGDCSALVAEAASYFDRVISAIA.

Residues cysteine 50 and cysteine 61 each contribute to the (2R,3E)-phycoerythrobilin site. Asparagine 72 carries the N4-methylasparagine modification. (2R,3E)-phycoerythrobilin-binding residues include cysteine 82 and cysteine 165.

Belongs to the phycobiliprotein family. As to quaternary structure, heterodimer of an alpha and a beta chain. Contains three covalently linked bilin chromophores.

It localises to the cellular thylakoid membrane. Light-harvesting photosynthetic bile pigment-protein from the phycobiliprotein complex. This Synechococcus sp. (strain WH7803) protein is C-phycoerythrin class 1 subunit beta (cpeB).